The chain runs to 571 residues: Leucine aminopeptidase A1, chloroplastic (571 aa).

The N-terminal 53 residues, 1 to 53 (MATLRVSSLFASSSSSLHSNPSVFTKYQSSPKWAFSFPVTPLCSKRSKRIVHC), are a transit peptide targeting the chloroplast. Mg(2+) contacts are provided by lysine 342 and aspartate 347. Residue lysine 354 is part of the active site. Residues aspartate 367, aspartate 427, and glutamate 429 each coordinate Mg(2+). The active site involves arginine 431.

Belongs to the peptidase M17 family. Homohexamer (dimer of homotrimers). It depends on Mg(2+) as a cofactor. Observed during floral development. Expressed in healthy and senescent leaves, cotyledons (emergence from seed coats), pistils, sepals, petals, stamens, and floral buds (at protein level). Present at very low levels in healthy leaves.

The protein localises to the plastid. Its subcellular location is the chloroplast. The enzyme catalyses Release of an N-terminal amino acid, Xaa-|-Yaa-, in which Xaa is preferably Leu, but may be other amino acids including Pro although not Arg or Lys, and Yaa may be Pro. Amino acid amides and methyl esters are also readily hydrolyzed, but rates on arylamides are exceedingly low.. It catalyses the reaction Release of N-terminal proline from a peptide.. In terms of biological role, catalyzes the removal of unsubstituted N-terminal amino acids from various peptides. When associated as homohexamer, catalyzes the proteolyzes of Xaa-Leu dipeptides. Possesses leucine aminopeptidase activity against the model substrate leucine-amido methyl coumarin. Presumably involved in the processing and regular turnover of intracellular proteins. Regulates wound signaling and has a role in insect defense. Its function is as follows. Functions as a molecular chaperone to protect proteins from heat-induced damage. The polypeptide is Leucine aminopeptidase A1, chloroplastic (Solanum lycopersicum (Tomato)).